We begin with the raw amino-acid sequence, 335 residues long: Holliday junction branch migration complex subunit RuvB (335 aa).

A large ATPase domain (RuvB-L) region spans residues 1-181 (MERIVEVEKF…FGMHFRLQFY (181 aa)). Residues Leu20, Arg21, Gly62, Lys65, Thr66, Thr67, 128–130 (EDF), Arg171, Tyr181, and Arg218 contribute to the ATP site. A Mg(2+)-binding site is contributed by Thr66. The tract at residues 182-252 (TPQELAQIIT…RTQKALEALG (71 aa)) is small ATPAse domain (RuvB-S). Positions 255 to 335 (ERGFDELDLK…LTPNIQNSLF (81 aa)) are head domain (RuvB-H). Arg309 and Arg314 together coordinate DNA.

Belongs to the RuvB family. As to quaternary structure, homohexamer. Forms an RuvA(8)-RuvB(12)-Holliday junction (HJ) complex. HJ DNA is sandwiched between 2 RuvA tetramers; dsDNA enters through RuvA and exits via RuvB. An RuvB hexamer assembles on each DNA strand where it exits the tetramer. Each RuvB hexamer is contacted by two RuvA subunits (via domain III) on 2 adjacent RuvB subunits; this complex drives branch migration. In the full resolvosome a probable DNA-RuvA(4)-RuvB(12)-RuvC(2) complex forms which resolves the HJ.

The protein localises to the cytoplasm. It catalyses the reaction ATP + H2O = ADP + phosphate + H(+). The RuvA-RuvB-RuvC complex processes Holliday junction (HJ) DNA during genetic recombination and DNA repair, while the RuvA-RuvB complex plays an important role in the rescue of blocked DNA replication forks via replication fork reversal (RFR). RuvA specifically binds to HJ cruciform DNA, conferring on it an open structure. The RuvB hexamer acts as an ATP-dependent pump, pulling dsDNA into and through the RuvAB complex. RuvB forms 2 homohexamers on either side of HJ DNA bound by 1 or 2 RuvA tetramers; 4 subunits per hexamer contact DNA at a time. Coordinated motions by a converter formed by DNA-disengaged RuvB subunits stimulates ATP hydrolysis and nucleotide exchange. Immobilization of the converter enables RuvB to convert the ATP-contained energy into a lever motion, pulling 2 nucleotides of DNA out of the RuvA tetramer per ATP hydrolyzed, thus driving DNA branch migration. The RuvB motors rotate together with the DNA substrate, which together with the progressing nucleotide cycle form the mechanistic basis for DNA recombination by continuous HJ branch migration. Branch migration allows RuvC to scan DNA until it finds its consensus sequence, where it cleaves and resolves cruciform DNA. The sequence is that of Holliday junction branch migration complex subunit RuvB from Nitratiruptor sp. (strain SB155-2).